Consider the following 602-residue polypeptide: Aryl hydrocarbon receptor protein 1 (602 aa).

The propeptide occupies 1-2 (MY). The span at 1–12 (MYASKRRQRNFK) shows a compositional bias: basic residues. Residues 1 to 28 (MYASKRRQRNFKRVRDPPKQLTNTNPSK) form a disordered region. 2 consecutive short sequence motifs (nuclear localization signal) follow at residues 5–8 (KRRQ) and 28–33 (KRHRER). One can recognise a bHLH domain in the interval 18-71 (PKQLTNTNPSKRHRERLNGELETVAMLLPYDSSTISRLDKLSVLRLAVSFLQCK). 3 required for maintaining the overall integrity of the AHR:ARNT heterodimer and its transcriptional activity regions span residues 41–73 (VAML…CKAH), 133–141 (SLKSLGGFI), and 266–268 (ICV). A Nuclear export signal motif is present at residues 55 to 63 (LDKLSVLRL). A PAS domain is found at 126-196 (ESNFEEISLK…QQLDSNFHIP (71 aa)). The interval 440–467 (STSNSLFPSVPVPTPTTTKANRRRKENS) is disordered.

Interacts with daf-21/hsp90. Interacts with aha-1. As to expression, expressed in many distinct neuronal cells including RMED, RMEV, RMEL and RMER. Functions in URX neurons to promote aggregation behavior.

The protein resides in the nucleus. Probable ligand-activated transcriptional activator. Acts as a transcriptional regulator in GABAergic motor neuron cell fate specification and development. Promotes cell-type-specific expression of guanylate cyclase genes that have key roles in aggregation behavior and hyperoxia avoidance. Has no role in carbon dioxide avoidance. In Caenorhabditis elegans, this protein is Aryl hydrocarbon receptor protein 1.